The primary structure comprises 208 residues: Small ribosomal subunit protein uS4 (208 aa).

Residues 98 to 166 (SRLDNVVYRM…VKEAIEASRN (69 aa)) enclose the S4 RNA-binding domain.

The protein belongs to the universal ribosomal protein uS4 family. As to quaternary structure, part of the 30S ribosomal subunit. Contacts protein S5. The interaction surface between S4 and S5 is involved in control of translational fidelity.

Its function is as follows. One of the primary rRNA binding proteins, it binds directly to 16S rRNA where it nucleates assembly of the body of the 30S subunit. In terms of biological role, with S5 and S12 plays an important role in translational accuracy. In Kosmotoga olearia (strain ATCC BAA-1733 / DSM 21960 / TBF 19.5.1), this protein is Small ribosomal subunit protein uS4.